A 394-amino-acid chain; its full sequence is Lipid-A-disaccharide synthase (394 aa).

It belongs to the LpxB family.

It catalyses the reaction a lipid X + a UDP-2-N,3-O-bis[(3R)-3-hydroxyacyl]-alpha-D-glucosamine = a lipid A disaccharide + UDP + H(+). It participates in bacterial outer membrane biogenesis; LPS lipid A biosynthesis. Condensation of UDP-2,3-diacylglucosamine and 2,3-diacylglucosamine-1-phosphate to form lipid A disaccharide, a precursor of lipid A, a phosphorylated glycolipid that anchors the lipopolysaccharide to the outer membrane of the cell. This chain is Lipid-A-disaccharide synthase (lpxB), found in Synechocystis sp. (strain ATCC 27184 / PCC 6803 / Kazusa).